A 265-amino-acid polypeptide reads, in one-letter code: 4-hydroxy-tetrahydrodipicolinate reductase (265 aa).

NAD(+) is bound by residues 7–12, Asp33, 96–98, and 120–123; these read GASGRM, GTT, and AANF. The active-site Proton donor/acceptor is His153. His154 is a (S)-2,3,4,5-tetrahydrodipicolinate binding site. The active-site Proton donor is Lys157. A (S)-2,3,4,5-tetrahydrodipicolinate-binding site is contributed by 163–164; it reads GT.

Belongs to the DapB family.

Its subcellular location is the cytoplasm. It carries out the reaction (S)-2,3,4,5-tetrahydrodipicolinate + NAD(+) + H2O = (2S,4S)-4-hydroxy-2,3,4,5-tetrahydrodipicolinate + NADH + H(+). The enzyme catalyses (S)-2,3,4,5-tetrahydrodipicolinate + NADP(+) + H2O = (2S,4S)-4-hydroxy-2,3,4,5-tetrahydrodipicolinate + NADPH + H(+). It functions in the pathway amino-acid biosynthesis; L-lysine biosynthesis via DAP pathway; (S)-tetrahydrodipicolinate from L-aspartate: step 4/4. Its function is as follows. Catalyzes the conversion of 4-hydroxy-tetrahydrodipicolinate (HTPA) to tetrahydrodipicolinate. This chain is 4-hydroxy-tetrahydrodipicolinate reductase, found in Cupriavidus taiwanensis (strain DSM 17343 / BCRC 17206 / CCUG 44338 / CIP 107171 / LMG 19424 / R1) (Ralstonia taiwanensis (strain LMG 19424)).